Here is a 398-residue protein sequence, read N- to C-terminus: S-adenosylmethionine synthase (398 aa).

The tract at residues 1–21 is disordered; the sequence is MAANRRLFTSESVTEGHPDKM. His17 is a binding site for ATP. Asp19 contributes to the Mg(2+) binding site. A K(+)-binding site is contributed by Glu45. The L-methionine site is built by Glu58 and Gln101. Residues 101–111 are flexible loop; that stretch reads QSADIAGGVNQ. ATP-binding positions include 177-179, 244-245, Asp253, 259-260, Ala276, and Lys280; these read DGK, RF, and RK. Position 253 (Asp253) interacts with L-methionine. Lys284 is a binding site for L-methionine.

Belongs to the AdoMet synthase family. As to quaternary structure, homotetramer; dimer of dimers. Mg(2+) is required as a cofactor. K(+) serves as cofactor.

It is found in the cytoplasm. The enzyme catalyses L-methionine + ATP + H2O = S-adenosyl-L-methionine + phosphate + diphosphate. Its pathway is amino-acid biosynthesis; S-adenosyl-L-methionine biosynthesis; S-adenosyl-L-methionine from L-methionine: step 1/1. Its function is as follows. Catalyzes the formation of S-adenosylmethionine (AdoMet) from methionine and ATP. The overall synthetic reaction is composed of two sequential steps, AdoMet formation and the subsequent tripolyphosphate hydrolysis which occurs prior to release of AdoMet from the enzyme. The sequence is that of S-adenosylmethionine synthase from Oceanobacillus iheyensis (strain DSM 14371 / CIP 107618 / JCM 11309 / KCTC 3954 / HTE831).